Here is a 195-residue protein sequence, read N- to C-terminus: Pyridoxal 5'-phosphate synthase subunit PdxT (195 aa).

46–48 provides a ligand contact to L-glutamine; that stretch reads GES. The active-site Nucleophile is Cys78. L-glutamine is bound by residues Arg107 and 136 to 137; that span reads IR. Residues His173 and Glu175 each act as charge relay system in the active site.

Belongs to the glutaminase PdxT/SNO family. In the presence of PdxS, forms a dodecamer of heterodimers. Only shows activity in the heterodimer.

It carries out the reaction aldehydo-D-ribose 5-phosphate + D-glyceraldehyde 3-phosphate + L-glutamine = pyridoxal 5'-phosphate + L-glutamate + phosphate + 3 H2O + H(+). It catalyses the reaction L-glutamine + H2O = L-glutamate + NH4(+). It functions in the pathway cofactor biosynthesis; pyridoxal 5'-phosphate biosynthesis. Catalyzes the hydrolysis of glutamine to glutamate and ammonia as part of the biosynthesis of pyridoxal 5'-phosphate. The resulting ammonia molecule is channeled to the active site of PdxS. This Dehalococcoides mccartyi (strain ATCC BAA-2100 / JCM 16839 / KCTC 5957 / BAV1) protein is Pyridoxal 5'-phosphate synthase subunit PdxT.